The following is an 83-amino-acid chain: Small ribosomal subunit protein eS21 (83 aa).

Belongs to the eukaryotic ribosomal protein eS21 family. As to quaternary structure, component of the 40S small ribosomal subunit. Interacts with sta.

The protein localises to the cytoplasm. It is found in the cytosol. The protein resides in the rough endoplasmic reticulum. The chain is Small ribosomal subunit protein eS21 (RpS21) from Ceratitis capitata (Mediterranean fruit fly).